The following is a 229-amino-acid chain: Heptahelical transmembrane protein ADIPOR2 (229 aa).

Residues 1 to 4 (MQGA) are Cytoplasmic-facing. A helical transmembrane segment spans residues 5–25 (ASHDAAAAAAAAAVLGGGHGV). At 26–30 (PRWPR) the chain is on the extracellular side. A helical membrane pass occupies residues 31–51 (MVFLVGAMTCLAISATAHLLA). Over 52–66 (CHSRRASVVFWQLDY) the chain is Cytoplasmic. Residues 67-87 (AGISAMIVASFVPPVYYAFLC) form a helical membrane-spanning segment. Residues 88-92 (HRPAR) are Extracellular-facing. A helical transmembrane segment spans residues 93–113 (VAYLSAISALGALVVGALLSP). Residues 114–124 (PCSSPRFRRLR) lie on the Cytoplasmic side of the membrane. A helical transmembrane segment spans residues 125-145 (AALFLAMGLSGVVPALHALWL). Residues 146–153 (NWGHAACY) lie on the Extracellular side of the membrane. A helical membrane pass occupies residues 154-174 (LALSLEVAMGLAYAAGAWFYV). Over 175 to 194 (SRVPEKWRPGVFDVVGHSHQ) the chain is Cytoplasmic. A helical transmembrane segment spans residues 195–215 (IFHVLVLVGAVTHYVAVDVLL). Residues 216 to 229 (NWRETVAAACSATS) lie on the Extracellular side of the membrane.

Belongs to the ADIPOR family.

The protein localises to the membrane. Its function is as follows. May play a role in abiotic stress response. The polypeptide is Heptahelical transmembrane protein ADIPOR2 (ADIPOR2) (Oryza sativa subsp. japonica (Rice)).